Consider the following 322-residue polypeptide: tRNA U34 carboxymethyltransferase (322 aa).

Carboxy-S-adenosyl-L-methionine-binding positions include Lys-90, Trp-104, Lys-109, Gly-129, 151–153 (DPS), 180–181 (IE), Met-196, Tyr-200, and Arg-315.

It belongs to the class I-like SAM-binding methyltransferase superfamily. CmoB family. In terms of assembly, homotetramer.

The enzyme catalyses carboxy-S-adenosyl-L-methionine + 5-hydroxyuridine(34) in tRNA = 5-carboxymethoxyuridine(34) in tRNA + S-adenosyl-L-homocysteine + H(+). Its function is as follows. Catalyzes carboxymethyl transfer from carboxy-S-adenosyl-L-methionine (Cx-SAM) to 5-hydroxyuridine (ho5U) to form 5-carboxymethoxyuridine (cmo5U) at position 34 in tRNAs. This Cellvibrio japonicus (strain Ueda107) (Pseudomonas fluorescens subsp. cellulosa) protein is tRNA U34 carboxymethyltransferase.